The chain runs to 189 residues: Putative 3-methyladenine DNA glycosylase (189 aa).

Belongs to the DNA glycosylase MPG family.

This chain is Putative 3-methyladenine DNA glycosylase (mag), found in Corynebacterium glutamicum (strain ATCC 13032 / DSM 20300 / JCM 1318 / BCRC 11384 / CCUG 27702 / LMG 3730 / NBRC 12168 / NCIMB 10025 / NRRL B-2784 / 534).